Reading from the N-terminus, the 1383-residue chain is ATP-dependent RNA helicase TDRD9 (1383 aa).

Residues 35–82 are disordered; it reads EAPREEVQRSEEVPNEDPTAQAQVPVKATAPARPASTSGRSLSQRSSE. The span at 36–46 shows a compositional bias: basic and acidic residues; that stretch reads APREEVQRSEE. A compositionally biased stretch (low complexity) spans 70 to 80; the sequence is STSGRSLSQRS. The Helicase ATP-binding domain occupies 144 to 310; sequence ISLIESNSVV…FAVPVQNKMN (167 aa). 157-164 is a binding site for ATP; the sequence is GATGSGKS. The DEAH box motif lies at 256–259; that stretch reads DEVH. Positions 378–545 constitute a Helicase C-terminal domain; the sequence is SGAQFVSERS…ILKVKLLDMG (168 aa). Residues 945 to 1005 enclose the Tudor domain; sequence HPHPDLVCLA…REIPCQFLEL (61 aa).

This sequence belongs to the DEAD box helicase family. DEAH subfamily. As to quaternary structure, interacts with piRNA-associated proteins PIWIL1 and PIWIL4. As to expression, predominantly expressed in reproductive organs. Detected in mitotic spermatogonia, meiotic spermatocytes (predominantly at the pachytene stage), haploid spermatids in the testis, and in growing oocytes in the ovary (at protein level).

The protein resides in the cytoplasm. It is found in the nucleus. It catalyses the reaction ATP + H2O = ADP + phosphate + H(+). ATP-binding RNA helicase which plays a central role during spermatogenesis by repressing transposable elements and preventing their mobilization, which is essential for the germline integrity. Acts via the piRNA metabolic process, which mediates the repression of transposable elements during meiosis by forming complexes composed of piRNAs and Piwi proteins and governs the methylation and subsequent repression of transposons. Acts downstream of piRNA biogenesis: exclusively required for transposon silencing in the nucleus, suggesting that it acts as a nuclear effector in the nucleus together with PIWIL4. The protein is ATP-dependent RNA helicase TDRD9 of Mus musculus (Mouse).